A 285-amino-acid chain; its full sequence is Probable cobalamin biosynthesis protein CobD (285 aa).

Transmembrane regions (helical) follow at residues Leu10–Ile32, Tyr45–His67, Val145–Asn167, and Val266–Tyr283.

The protein belongs to the CobD/CbiB family.

The protein resides in the cell membrane. It participates in cofactor biosynthesis; adenosylcobalamin biosynthesis. In terms of biological role, converts cobyric acid to cobinamide by the addition of aminopropanol on the F carboxylic group. The sequence is that of Probable cobalamin biosynthesis protein CobD from Pyrococcus furiosus (strain ATCC 43587 / DSM 3638 / JCM 8422 / Vc1).